The following is a 123-amino-acid chain: Ribonuclease P protein component 2 (123 aa).

It belongs to the eukaryotic/archaeal RNase P protein component 2 family. In terms of assembly, consists of a catalytic RNA component and at least 4 protein subunits.

The enzyme catalyses Endonucleolytic cleavage of RNA, removing 5'-extranucleotides from tRNA precursor.. Its function is as follows. Part of ribonuclease P, a protein complex that generates mature tRNA molecules by cleaving their 5'-ends. The protein is Ribonuclease P protein component 2 of Aeropyrum pernix (strain ATCC 700893 / DSM 11879 / JCM 9820 / NBRC 100138 / K1).